An 820-amino-acid polypeptide reads, in one-letter code: TORTIFOLIA1-like protein 2 (820 aa).

HEAT repeat units lie at residues 61–98, 102–139, 146–183, 187–224, and 228–265; these read DKVSCFLSCILDTDSEQKSAVRKECIRLMGTLARFHEG, PYLGKMVSSIVKRLKDPDSVVRDACIETMGVLASKMSC, GVFVSLVKPLFEAIGDQNKYVQSGAALCLARVIDSSPE, AIIQRMLMRTVKLLNNSHFIAKPAVIELNRSIILAGGA, and SVLSSAMSSFQDALKNKDWTTRKAASVALMEIAATGEK. Over residues 304-321 the composition is skewed to low complexity; sequence PGSDSPEPSETESSVKES. Disordered regions lie at residues 304–325, 357–377, and 584–644; these read PGSDSPEPSETESSVKESYNGA, PVSARQPPTRYNDDPRKSNQD, and GSTI…GKTG. Over residues 367-377 the composition is skewed to basic and acidic residues; that stretch reads YNDDPRKSNQD. A compositionally biased stretch (polar residues) spans 584–613; it reads GSTISPRLSSCTSRTSTDIRNRQSTLSTSK.

This Arabidopsis thaliana (Mouse-ear cress) protein is TORTIFOLIA1-like protein 2.